A 188-amino-acid polypeptide reads, in one-letter code: Peptide deformylase (188 aa).

Fe cation is bound by residues cysteine 109 and histidine 152. Residue glutamate 153 is part of the active site. Histidine 156 contributes to the Fe cation binding site.

The protein belongs to the polypeptide deformylase family. Fe(2+) is required as a cofactor.

The enzyme catalyses N-terminal N-formyl-L-methionyl-[peptide] + H2O = N-terminal L-methionyl-[peptide] + formate. In terms of biological role, removes the formyl group from the N-terminal Met of newly synthesized proteins. Requires at least a dipeptide for an efficient rate of reaction. N-terminal L-methionine is a prerequisite for activity but the enzyme has broad specificity at other positions. The polypeptide is Peptide deformylase (Chloroflexus aggregans (strain MD-66 / DSM 9485)).